The primary structure comprises 122 residues: Small ribosomal subunit protein uS13 (122 aa).

Positions 98–122 are disordered; it reads VRGQRTHTNARTRKGPAKAIAGKKK.

Belongs to the universal ribosomal protein uS13 family. In terms of assembly, part of the 30S ribosomal subunit. Forms a loose heterodimer with protein S19. Forms two bridges to the 50S subunit in the 70S ribosome.

In terms of biological role, located at the top of the head of the 30S subunit, it contacts several helices of the 16S rRNA. In the 70S ribosome it contacts the 23S rRNA (bridge B1a) and protein L5 of the 50S subunit (bridge B1b), connecting the 2 subunits; these bridges are implicated in subunit movement. Contacts the tRNAs in the A and P-sites. This Jannaschia sp. (strain CCS1) protein is Small ribosomal subunit protein uS13.